A 306-amino-acid chain; its full sequence is Beta-lactamase (306 aa).

Residues 1–36 (MKLKTKASIKFGICVGLLCLSITGFTPFFNSTHAEA) form the signal peptide. The active-site Acyl-ester intermediate is the S89. 251 to 253 (KSG) provides a ligand contact to substrate.

It belongs to the class-A beta-lactamase family.

Its subcellular location is the secreted. It catalyses the reaction a beta-lactam + H2O = a substituted beta-amino acid. Functionally, this protein is a beta-lactamase with a substrate specificity for penicillins. The protein is Beta-lactamase (penP) of Bacillus subtilis (strain 168).